Consider the following 59-residue polypeptide: Large ribosomal subunit protein bL32 (59 aa).

2 disordered regions span residues 1–23 and 35–59; these read MAVQ…DFLT and EVHL…TKND. The span at 49–59 shows a compositional bias: basic residues; sequence RGKKVVKTKND.

Belongs to the bacterial ribosomal protein bL32 family.

This Burkholderia ambifaria (strain MC40-6) protein is Large ribosomal subunit protein bL32.